Consider the following 250-residue polypeptide: uncharacterized protein (250 aa).

Positions 15, 17, 36, 56, 57, and 82 each coordinate NAD(+). Serine 143 is a substrate binding site. Residues tyrosine 156, lysine 160, phenylalanine 189, and threonine 191 each contribute to the NAD(+) site. The active-site Proton acceptor is the tyrosine 156.

The protein belongs to the short-chain dehydrogenases/reductases (SDR) family.

This is an uncharacterized protein from Mycobacterium tuberculosis (strain CDC 1551 / Oshkosh).